The sequence spans 344 residues: Dihydroorotase (344 aa).

Positions 14 and 16 each coordinate Zn(2+). Substrate is bound by residues 16-18 (HLR) and Asn42. Residues Lys100, His137, and His175 each coordinate Zn(2+). Lys100 is subject to N6-carboxylysine. His137 is a binding site for substrate. Leu220 provides a ligand contact to substrate. Asp248 serves as a coordination point for Zn(2+). Asp248 is a catalytic residue. Residues His252 and Ala264 each contribute to the substrate site.

The protein belongs to the metallo-dependent hydrolases superfamily. DHOase family. Class II DHOase subfamily. As to quaternary structure, homodimer. The cofactor is Zn(2+).

The catalysed reaction is (S)-dihydroorotate + H2O = N-carbamoyl-L-aspartate + H(+). The protein operates within pyrimidine metabolism; UMP biosynthesis via de novo pathway; (S)-dihydroorotate from bicarbonate: step 3/3. Functionally, catalyzes the reversible cyclization of carbamoyl aspartate to dihydroorotate. In Roseobacter denitrificans (strain ATCC 33942 / OCh 114) (Erythrobacter sp. (strain OCh 114)), this protein is Dihydroorotase.